Reading from the N-terminus, the 240-residue chain is Protein MGARP (240 aa).

The Cytoplasmic portion of the chain corresponds to 1 to 40; sequence MYLRRAVSKTLALPLRAPPNPAPLGKDASLRRMSSNRFPG. Residues 41-63 traverse the membrane as a helical; Anchor for type IV membrane protein segment; it reads SSGSNMIYYLVVGVTVSAGGYYA. Residues 64–240 are Mitochondrial intermembrane-facing; it reads YKTVTSDQAK…VGSEAASAQG (177 aa). Positions 166–240 are disordered; the sequence is RETTEVNPET…VGSEAASAQG (75 aa). The span at 170-181 shows a compositional bias: low complexity; sequence EVNPETTPEVTN. The segment covering 191–201 has biased composition (basic and acidic residues); it reads DNDKDTTKNET. Over residues 202–213 the composition is skewed to acidic residues; that stretch reads SDEYAELEEENS. The segment covering 228–240 has biased composition (low complexity); the sequence is EASVGSEAASAQG.

As to quaternary structure, interacts with RHOT1/Miro-1, TRAK1/OIP106 and TRAK2/GRIF1. Interacts with RHOT2/Miro-2. In terms of tissue distribution, expressed in the brain, adrenal gland and corneal endothelium (CE). Expressed in steroid-producing cells of the ovary and testis (at protein level). Expressed in steroid-producing cells of the ovary and testis. Weakly expressed in placenta. Expressed in corneal endothelial cells.

Its subcellular location is the mitochondrion. It localises to the mitochondrion outer membrane. The protein resides in the mitochondrion inner membrane. Functionally, plays a role in the trafficking of mitochondria along microtubules. Regulates the kinesin-mediated axonal transport of mitochondria to nerve terminals along microtubules during hypoxia. Participates in the translocation of TRAK2/GRIF1 from the cytoplasm to the mitochondrion. Also plays a role in steroidogenesis through maintenance of mitochondrial abundance and morphology. Plays an inhibitory role during neocortex development by regulating mitochondrial morphology, distribution and motility in neocortical neurons. This is Protein MGARP (MGARP) from Homo sapiens (Human).